A 79-amino-acid chain; its full sequence is Translational regulator CsrA (79 aa).

Belongs to the CsrA/RsmA family. Homodimer; the beta-strands of each monomer intercalate to form a hydrophobic core, while the alpha-helices form wings that extend away from the core.

The protein localises to the cytoplasm. Functionally, a translational regulator that binds mRNA to regulate translation initiation and/or mRNA stability. Usually binds in the 5'-UTR at or near the Shine-Dalgarno sequence preventing ribosome-binding, thus repressing translation. Its main target seems to be the major flagellin gene, while its function is anatagonized by FliW. The chain is Translational regulator CsrA from Geotalea uraniireducens (strain Rf4) (Geobacter uraniireducens).